An 862-amino-acid chain; its full sequence is Leucine--tRNA ligase (862 aa).

Residues 44-54 (PYPSGRIHMGH) carry the 'HIGH' region motif. Residues 622–626 (KMSKS) carry the 'KMSKS' region motif. Lys-625 lines the ATP pocket.

This sequence belongs to the class-I aminoacyl-tRNA synthetase family.

The protein resides in the cytoplasm. It catalyses the reaction tRNA(Leu) + L-leucine + ATP = L-leucyl-tRNA(Leu) + AMP + diphosphate. This is Leucine--tRNA ligase from Rhodospirillum rubrum (strain ATCC 11170 / ATH 1.1.1 / DSM 467 / LMG 4362 / NCIMB 8255 / S1).